Reading from the N-terminus, the 541-residue chain is 2-succinyl-5-enolpyruvyl-6-hydroxy-3-cyclohexene-1-carboxylate synthase (541 aa).

It belongs to the TPP enzyme family. MenD subfamily. In terms of assembly, homodimer. Requires Mg(2+) as cofactor. It depends on Mn(2+) as a cofactor. Thiamine diphosphate serves as cofactor.

It catalyses the reaction isochorismate + 2-oxoglutarate + H(+) = 5-enolpyruvoyl-6-hydroxy-2-succinyl-cyclohex-3-ene-1-carboxylate + CO2. The protein operates within quinol/quinone metabolism; 1,4-dihydroxy-2-naphthoate biosynthesis; 1,4-dihydroxy-2-naphthoate from chorismate: step 2/7. It participates in quinol/quinone metabolism; menaquinone biosynthesis. Functionally, catalyzes the thiamine diphosphate-dependent decarboxylation of 2-oxoglutarate and the subsequent addition of the resulting succinic semialdehyde-thiamine pyrophosphate anion to isochorismate to yield 2-succinyl-5-enolpyruvyl-6-hydroxy-3-cyclohexene-1-carboxylate (SEPHCHC). The sequence is that of 2-succinyl-5-enolpyruvyl-6-hydroxy-3-cyclohexene-1-carboxylate synthase from Leuconostoc citreum (strain KM20).